A 578-amino-acid chain; its full sequence is Malonate--CoA ligase ACSF3, mitochondrial (578 aa).

The N-terminal 19 residues, 1-19, are a transit peptide targeting the mitochondrion; sequence MRVGAFLGRSLFSCSHVRG. Position 205–213 (205–213) interacts with ATP; it reads TSGTTGRPK. Positions 394–413 are disordered; sequence QNPRKEGTSYTTHAQGDSTG. ATP contacts are provided by Asp459, Arg473, and Lys565.

Belongs to the ATP-dependent AMP-binding enzyme family.

It is found in the mitochondrion. It catalyses the reaction tetracosanoate + ATP + CoA = tetracosanoyl-CoA + AMP + diphosphate. The enzyme catalyses malonate + ATP + CoA = malonyl-CoA + AMP + diphosphate. Functionally, catalyzes the initial reaction in intramitochondrial fatty acid synthesis, by activating malonate and methylmalonate, but not acetate, into their respective CoA thioester. May have some preference toward very-long-chain substrates. In Xenopus laevis (African clawed frog), this protein is Malonate--CoA ligase ACSF3, mitochondrial.